The sequence spans 685 residues: MEIRRSTEEVEENHVMQITGSNGIVHNMEFMPQAYLRNQYSSEIDIDEEFVSTYPLEDAPLPIFLKFEDVEYKVRNSHASSANLVKTMVSKVVTHTNPDPDGYKHILKGITGSTGPGEILALMGPSGSGKTTLLKIMGGRLTDNVKGKLTYNDIPYSPSVKRRIGFVTQDDVLLPQLTVEETLAFAAFLRLPSSMSKEQKYAKIEMIIKELGLERCRRTRVGGGFVKGISGGERKRASIAYEILVDPSLLLLDEPTSGLDSTSATKLLHILQGVAKAGRTVITTIHQPSSRMFHMFDKLLLISEGHPAFYGKARESMEYFSSLRILPEIAMNPAEFLLDLATGQVSDISLPDELLAAKTAQPDSEEVLLKYLKQRYKTDLEPKEKEENHRNRKAPEHLQIAIQVKKDWTLSWWDQFLILSRRTFRERRRDYFDKLRLVQSLGVAVVLGLLWWKSKTDTEAHLRDQVGLMFYICIFWTSSSLFGAVYVFPFEKIYLVKERKAEMYRLSVYYVCSTLCDMVAHVLYPTFFMIIVYFMAEFNRNIPCFLFTVLTILLIAITSQGAGEFLGASVLSIKRAGMIASLVLMLFLLTGGYYVQHIPKFMQWLKYLSFMHYGFRLLLKVQYSADQLFECGSKGGCRTLQSSSSFDTINLNGGLQELWVLLAMAFGYRLCAYFCLRKKISICHL.

The 265-residue stretch at 65-329 (LKFEDVEYKV…FSSLRILPEI (265 aa)) folds into the ABC transporter domain. 124–131 (GPSGSGKT) contributes to the ATP binding site. Positions 414–623 (DQFLILSRRT…GFRLLLKVQY (210 aa)) constitute an ABC transmembrane type-2 domain. The next 6 helical transmembrane spans lie at 432–452 (FDKLRLVQSLGVAVVLGLLWW), 468–488 (LMFYICIFWTSSSLFGAVYVF), 518–538 (MVAHVLYPTFFMIIVYFMAEF), 542–562 (IPCFLFTVLTILLIAITSQGA), 576–596 (AGMIASLVLMLFLLTGGYYVQ), and 648–668 (TINLNGGLQELWVLLAMAFGY).

Belongs to the ABC transporter superfamily. ABCG family. Eye pigment precursor importer (TC 3.A.1.204) subfamily. As to quaternary structure, homo- or heterodimer. Mostly expressed in flowers, especially in tapetum within anthers.

It localises to the cell membrane. The protein localises to the endoplasmic reticulum membrane. Its function is as follows. Mediates the transport of sporopollenin precursors (e.g. polyketides) across the tapetum plasma membrane into the anther locule for polymerization on developing microspore walls, thus being required for male fertility and pollen exine formation and patterning prior to tapetum programmed cell death. In Arabidopsis thaliana (Mouse-ear cress), this protein is ABC transporter G family member 26.